Consider the following 590-residue polypeptide: FAD-linked oxidoreductase malF (590 aa).

An N-terminal signal peptide occupies residues Met1–Thr18. Asn44, Asn80, Asn103, Asn178, and Asn396 each carry an N-linked (GlcNAc...) asparagine glycan. An FAD-binding PCMH-type domain is found at Ala117 to Asp303.

The protein belongs to the oxygen-dependent FAD-linked oxidoreductase family. FAD is required as a cofactor.

In terms of biological role, FAD-linked oxidoreductase; part of the gene cluster that mediates the biosynthesis of malbrancheamide, a dichlorinated fungal indole alkaloid that belongs to a family of natural products containing a characteristic bicyclo[2.2.2]diazaoctane core. The first step of malbrancheamide biosynthesis involves coupling of L-proline and L-tryptophan by malG, a bimodular NRPS, to produce L-Pro-L-Trp aldehyde through reductive offloading. This compound undergoes spontaneous cyclization and dehydration to give a dienamine which is reverse prenylated at C-2 by malE. The other prenyltransferase present in the cluster, malB, displays modest activity, suggesting that may be a redundant gene in the pathway. Subsequently, a [4+2] Diels-Alder cyclo-addition catalyzed by the bifunctional enzyme malC forms the characteristic bicyclo[2.2.2]diazaoctane ring of premalbrancheamid. Finally, the flavin-dependent halogenase malA catalyzes the iterative dichlorination of the indole ring of premalbrancheamide to yield C-9 monochlorinated malbrancheamide B, C-8 monochlorinated isomalbrancheamide B, and dichlorinated malbrancheamide. MalA is also able to brominate premalbrancheamide at C-9 to yield malbrancheamide C, and, to a lesser extend, at C-8 to yield isomalbrancheamide C. Finally, malA can brominate C-9 monochlorinated malbrancheamide B at C-8 to yield malbrancheamide D, or C-8 monochlorinated isomalbrancheamide B at C-9 to produce isomalbrancheamide D. The protein is FAD-linked oxidoreductase malF of Malbranchea aurantiaca.